Reading from the N-terminus, the 576-residue chain is Immunoglobulin mu heavy chain (576 aa).

Residue glutamine 1 is modified to Pyrrolidone carboxylic acid. 5 consecutive Ig-like domains span residues 1 to 97 (QVTL…TYYC), 132 to 212 (PTLF…EHVC), 236 to 334 (PKVS…QNAS), 352 to 442 (PSFA…QTIS), and 452 to 553 (PDVY…RTVD). A variable (V) domain, involved in antigen recognition region spans residues 1-124 (QVTLTESGPA…VWGKGTTVTV (124 aa)). 3 disulfide bridges follow: cysteine 22-cysteine 97, cysteine 153-cysteine 212, and cysteine 259-cysteine 320. Residues asparagine 74 and asparagine 170 are each glycosylated (N-linked (GlcNAc...) asparagine). A constant (C) domain region spans residues 125–576 (SSGSASAPTL…VMSDTAGTCY (452 aa)). N-linked (GlcNAc...) asparagine glycosylation is found at asparagine 332, asparagine 395, and asparagine 402. Disulfide bonds link cysteine 367-cysteine 426 and cysteine 474-cysteine 536. A glycan (N-linked (GlcNAc...) asparagine) is linked at asparagine 563.

In terms of assembly, immunoglobulins are composed of two identical heavy chains and two identical light chains; disulfide-linked. It is found almost exclusively as a homopentamer in the serum. Membrane-bound IgM molecules are non-covalently associated with heterodimer of CD79A and CD79B.

Its subcellular location is the secreted. The protein localises to the cell membrane. Functionally, immunoglobulins, also known as antibodies, are membrane-bound or secreted glycoproteins produced by B lymphocytes. In the recognition phase of humoral immunity, the membrane-bound immunoglobulins serve as receptors which, upon binding of a specific antigen, trigger the clonal expansion and differentiation of B lymphocytes into immunoglobulins-secreting plasma cells. Secreted immunoglobulins mediate the effector phase of humoral immunity, which results in the elimination of bound antigens. The antigen binding site is formed by the variable domain of one heavy chain, together with that of its associated light chain. Thus, each immunoglobulin has two antigen binding sites with remarkable affinity for a particular antigen. The variable domains are assembled by a process called V-(D)-J rearrangement and can then be subjected to somatic hypermutations which, after exposure to antigen and selection, allow affinity maturation for a particular antigen. IgM antibodies play an important role in primary defense mechanisms. They have been shown to be involved in early recognition of external invaders like bacteria and viruses, cellular waste and modified self, as well as in recognition and elimination of precancerous and cancerous lesions. The membrane-bound form is found in the majority of normal B cells alongside with IgD. Membrane-bound IgM induces the phosphorylation of CD79A and CD79B by the Src family of protein tyrosine kinases. It may cause death of cells by apoptosis. It is also found in soluble form, which represents about 30% of the total serum immunoglobulins where it is found almost exclusively as a homopentamer. After the antigen binds to the B cell receptor, the secreted form is secreted in large amounts (, PubMed:16895553). This is Immunoglobulin mu heavy chain from Homo sapiens (Human).